Reading from the N-terminus, the 442-residue chain is 3-dehydroquinate synthase, chloroplastic (442 aa).

The N-terminal 61 residues, 1–61, are a transit peptide targeting the chloroplast; that stretch reads MASSFCPKQA…TTRLKVLATS (61 aa). Residues asparagine 119, 150-152, lysine 155, 183-188, 208-209, lysine 221, lysine 230, and 248-251 contribute to the NAD(+) site; these read DGE, GGVIGD, TT, and TLNT. Glutamate 263 is a binding site for a divalent metal cation. Lysine 305 contributes to the NAD(+) binding site. The a divalent metal cation site is built by histidine 326 and histidine 343.

It belongs to the sugar phosphate cyclases superfamily. Dehydroquinate synthase family. In terms of assembly, homodimer. A divalent metal cation serves as cofactor. NAD(+) is required as a cofactor. As to expression, highly expressed in roots. Lower expression in stems, flowers and cotyledons. Barely detected in leaves.

It localises to the plastid. The protein localises to the chloroplast. It carries out the reaction 7-phospho-2-dehydro-3-deoxy-D-arabino-heptonate = 3-dehydroquinate + phosphate. It participates in metabolic intermediate biosynthesis; chorismate biosynthesis; chorismate from D-erythrose 4-phosphate and phosphoenolpyruvate: step 2/7. In terms of biological role, catalyzes the second step in the shikimate pathway. The protein is 3-dehydroquinate synthase, chloroplastic (DHQS) of Solanum lycopersicum (Tomato).